Here is a 411-residue protein sequence, read N- to C-terminus: MMP alpha-(1-&gt;4)-mannosyltransferase (411 aa).

The protein belongs to the glycosyltransferase group 1 family. Glycosyltransferase 4 subfamily.

It catalyses the reaction [3-O-methyl-alpha-D-mannosyl-(1-&gt;4)](n)-3-O-methyl-D-mannose + GDP-alpha-D-mannose = alpha-D-mannosyl-(1-&gt;4)-[3-O-methyl-alpha-D-mannosyl-(1-&gt;4)](n)-3-O-methyl-D-mannose + GDP + H(+). The catalysed reaction is [3-O-methyl-alpha-D-mannosyl-(1-&gt;4)](n)-1-O,3-O-dimethyl-alpha-D-mannose + GDP-alpha-D-mannose = alpha-D-mannosyl-(1-&gt;4)-[3-O-methyl-alpha-D-mannosyl-(1-&gt;4)](n)-1-O,3-O-dimethyl-alpha-D-mannose + GDP + H(+). With respect to regulation, activity is significantly enhanced in the presence of Mg(2+). Its function is as follows. Glycosyltransferase involved in the biosynthesis of 3-O-methylmannose polysaccharides (MMP), which are intracellular polymethylated polysaccharides implicated in the modulation of fatty acid metabolism in non-tuberculous mycobacteria. Highly specific alpha-(1-&gt;4)-mannosyltransferase that can transfer mannose units from GDP-mannose to a wide range of alpha-(1-&gt;4) oligomannosides longer than three mannoses, including all hydrolytic products of MmpH. Can use synthetic trimannosides and tetramannosides as substrates, but not mono- and disaccharides, and is significantly more active with the methylated substrates, preferring the tetramannosides over the trimannosides. The protein is MMP alpha-(1-&gt;4)-mannosyltransferase of Mycolicibacterium hassiacum (strain DSM 44199 / CIP 105218 / JCM 12690 / 3849) (Mycobacterium hassiacum).